The primary structure comprises 80 residues: uncharacterized protein (80 aa).

A signal peptide spans 1–23; sequence MKWNNMLKAAGIAVLLFSVFAYA.

This is an uncharacterized protein from Bacillus subtilis (strain 168).